We begin with the raw amino-acid sequence, 387 residues long: 3-ketoacyl-CoA thiolase (387 aa).

C91 (acyl-thioester intermediate) is an active-site residue. Catalysis depends on proton acceptor residues H343 and C373.

This sequence belongs to the thiolase-like superfamily. Thiolase family. Heterotetramer of two alpha chains (FadB) and two beta chains (FadA).

The protein resides in the cytoplasm. It carries out the reaction an acyl-CoA + acetyl-CoA = a 3-oxoacyl-CoA + CoA. It participates in lipid metabolism; fatty acid beta-oxidation. Functionally, catalyzes the final step of fatty acid oxidation in which acetyl-CoA is released and the CoA ester of a fatty acid two carbons shorter is formed. The sequence is that of 3-ketoacyl-CoA thiolase from Shigella sonnei (strain Ss046).